Consider the following 66-residue polypeptide: U10-theraphotoxin-Cg1a 3 (66 aa).

An N-terminal signal peptide occupies residues 1 to 21; sequence MKTSVLFVIFGLALLFCLSFA. A propeptide spanning residues 22-29 is cleaved from the precursor; it reads DELEDTGR. 3 disulfide bridges follow: Cys-31/Cys-46, Cys-38/Cys-51, and Cys-45/Cys-58.

The protein belongs to the neurotoxin 10 (Hwtx-1) family. 29 (Jztx-13) subfamily. Expressed by the venom gland.

The protein resides in the secreted. In terms of biological role, probable ion channel inhibitor. The polypeptide is U10-theraphotoxin-Cg1a 3 (Chilobrachys guangxiensis (Chinese earth tiger tarantula)).